A 332-amino-acid chain; its full sequence is MANVAVMGAGSWGTTLAKVFADAGNDVRLWARREELAEAINTRHENPDYLPELPLPESIKASTDPATALQSADIVIFGVPSQTLRGNLEKWAPLLPEEATLVSISKGVEKATLNLMSEVIADAAGVSSDRIAVLSGPNLAKEVAQEQPAATVIACSDAARAEAVQHAAAAPYFRPYTNTDVIGAEIGGACKNVIALACGMAAGKGLGNNTMATIITRGLAEITRLGVKLGADPFTFSGLAGMGDLVATCSSTLSRNRTFGYRLGQGGTLEEATAATNGQVAEGVISSDSIFRLAQRADVEMPITQAVYGVCHRGVTVDDMIVALMGRTKKAE.

Positions 11, 12, 32, 33, and 106 each coordinate NADPH. Sn-glycerol 3-phosphate-binding residues include K106 and G136. A140 contributes to the NADPH binding site. Sn-glycerol 3-phosphate is bound by residues K191, D244, S254, R255, and N256. The active-site Proton acceptor is the K191. R255 lines the NADPH pocket. NADPH contacts are provided by V280 and E282.

It belongs to the NAD-dependent glycerol-3-phosphate dehydrogenase family.

Its subcellular location is the cytoplasm. It carries out the reaction sn-glycerol 3-phosphate + NAD(+) = dihydroxyacetone phosphate + NADH + H(+). The catalysed reaction is sn-glycerol 3-phosphate + NADP(+) = dihydroxyacetone phosphate + NADPH + H(+). It functions in the pathway membrane lipid metabolism; glycerophospholipid metabolism. Catalyzes the reduction of the glycolytic intermediate dihydroxyacetone phosphate (DHAP) to sn-glycerol 3-phosphate (G3P), the key precursor for phospholipid synthesis. In Corynebacterium aurimucosum (strain ATCC 700975 / DSM 44827 / CIP 107346 / CN-1) (Corynebacterium nigricans), this protein is Glycerol-3-phosphate dehydrogenase [NAD(P)+].